The sequence spans 173 residues: Galactose-6-phosphate isomerase subunit LacB (173 aa).

It belongs to the LacAB/RpiB family. As to quaternary structure, heteromultimeric protein consisting of LacA and LacB.

The enzyme catalyses aldehydo-D-galactose 6-phosphate = keto-D-tagatose 6-phosphate. It functions in the pathway carbohydrate metabolism; D-galactose 6-phosphate degradation; D-tagatose 6-phosphate from D-galactose 6-phosphate: step 1/1. The polypeptide is Galactose-6-phosphate isomerase subunit LacB (Clostridium acetobutylicum (strain ATCC 824 / DSM 792 / JCM 1419 / IAM 19013 / LMG 5710 / NBRC 13948 / NRRL B-527 / VKM B-1787 / 2291 / W)).